A 309-amino-acid chain; its full sequence is Biotin synthase (309 aa).

A Radical SAM core domain is found at asparagine 35 to serine 259. [4Fe-4S] cluster-binding residues include cysteine 50, cysteine 54, and cysteine 57. Residues cysteine 94, cysteine 125, cysteine 185, and arginine 257 each coordinate [2Fe-2S] cluster.

This sequence belongs to the radical SAM superfamily. Biotin synthase family. As to quaternary structure, homodimer. The cofactor is [4Fe-4S] cluster. [2Fe-2S] cluster is required as a cofactor.

It carries out the reaction (4R,5S)-dethiobiotin + (sulfur carrier)-SH + 2 reduced [2Fe-2S]-[ferredoxin] + 2 S-adenosyl-L-methionine = (sulfur carrier)-H + biotin + 2 5'-deoxyadenosine + 2 L-methionine + 2 oxidized [2Fe-2S]-[ferredoxin]. Its pathway is cofactor biosynthesis; biotin biosynthesis; biotin from 7,8-diaminononanoate: step 2/2. Functionally, catalyzes the conversion of dethiobiotin (DTB) to biotin by the insertion of a sulfur atom into dethiobiotin via a radical-based mechanism. This is Biotin synthase from Rickettsia felis (strain ATCC VR-1525 / URRWXCal2) (Rickettsia azadi).